We begin with the raw amino-acid sequence, 370 residues long: Putative transport protein YdiK (370 aa).

The Periplasmic segment spans residues 1–17 (MVNVRQPRDVAQILLSV). A helical membrane pass occupies residues 18 to 38 (LFLAIMIVACLWIVQPFILGF). Ala-39 is a topological domain (cytoplasmic). The chain crosses the membrane as a helical span at residues 40-60 (WAGTVVIATWPVLLRLQKIMF). Topologically, residues 61–65 (GRRSL) are periplasmic. The chain crosses the membrane as a helical span at residues 66–86 (AVLVMTLLLVMVFIIPIALLV). Over 87–106 (NSIVDGSGPLIKAISSGDMT) the chain is Cytoplasmic. A helical transmembrane segment spans residues 107 to 127 (LPDLAWLNTIPVIGAKLYAGW). The Periplasmic portion of the chain corresponds to 128–156 (HNLLDMGGTAIMAKVRPYIGTTTTWFVGQ). The helical transmembrane segment at 157–177 (AAHIGRFMVHCALMLLFSALL) threads the bilayer. Residues 178 to 213 (YWRGEQVAQGIRHFATRLAGVRGDAAVLLAAQAIRA) are Cytoplasmic-facing. A helical membrane pass occupies residues 214-234 (VALGVVVTALVQAVLGGIGLA). Residues 235 to 248 (VSGVPYATLLTVLM) are Periplasmic-facing. Residues 249 to 269 (ILSCLVQLGPLPVLIPAIIWL) form a helical membrane-spanning segment. The Cytoplasmic portion of the chain corresponds to 270–274 (YWTGD). A helical membrane pass occupies residues 275–295 (TTWGTVLLVWSGVVGTLDNVI). Residues 296 to 308 (RPMLIRMGADLPL) lie on the Periplasmic side of the membrane. A helical transmembrane segment spans residues 309–329 (ILILSGVIGGLIAFGMIGLFI). Over 330-370 (GPVLLAVSWRLFAAWVEEVPPPTDQPEEILEELGEIEKPNK) the chain is Cytoplasmic.

It belongs to the autoinducer-2 exporter (AI-2E) (TC 2.A.86) family.

It localises to the cell inner membrane. The protein is Putative transport protein YdiK (ydiK) of Escherichia coli (strain K12).